The sequence spans 319 residues: Tyrosine phosphatase-like protein N3 (319 aa).

The Tyrosine-protein phosphatase domain occupies 7 to 285 (SNLSIHEFWR…LIINKILLHS (279 aa)).

It belongs to the protein-tyrosine phosphatase family.

This chain is Tyrosine phosphatase-like protein N3 (N7), found in Microplitis demolitor bracovirus (isolate Webb) (MdBV).